The following is a 538-amino-acid chain: Tryptophan 7-halogenase PrnA (538 aa).

The FAD site is built by Gly13, Thr15, Ala16, Ser39, Ile42, Ile45, Glu49, and Ala50. The active site involves Lys79. Residue Lys79 participates in 7-chloro-L-tryptophan binding. FAD is bound by residues Val187 and Leu337. Glu346 contacts 7-chloro-L-tryptophan. Glu346 serves as a coordination point for L-tryptophan. The chloride site is built by Thr348 and Gly349. Ile350 is an FAD binding site. Positions 443, 444, 450, and 454 each coordinate 7-chloro-L-tryptophan. L-tryptophan contacts are provided by Tyr443, Tyr444, Glu450, and Phe454.

It belongs to the flavin-dependent halogenase family. Bacterial tryptophan halogenase subfamily. As to quaternary structure, homodimer.

The catalysed reaction is L-tryptophan + FADH2 + chloride + O2 = 7-chloro-L-tryptophan + FAD + 2 H2O. Its pathway is antibiotic biosynthesis. Its function is as follows. Involved in the biosynthesis of the antifungal antibiotic pyrrolnitrin. Catalyzes the chlorination of tryptophan (Trp) at C7 position to yield 7-chloro-L-tryptophan (7-CLT). This Pseudomonas fluorescens protein is Tryptophan 7-halogenase PrnA.